The primary structure comprises 317 residues: Porphobilinogen deaminase (317 aa).

At C245 the chain carries S-(dipyrrolylmethanemethyl)cysteine.

It belongs to the HMBS family. In terms of assembly, monomer. Dipyrromethane serves as cofactor.

The enzyme catalyses 4 porphobilinogen + H2O = hydroxymethylbilane + 4 NH4(+). It functions in the pathway porphyrin-containing compound metabolism; protoporphyrin-IX biosynthesis; coproporphyrinogen-III from 5-aminolevulinate: step 2/4. The protein operates within porphyrin-containing compound metabolism; chlorophyll biosynthesis. Tetrapolymerization of the monopyrrole PBG into the hydroxymethylbilane pre-uroporphyrinogen in several discrete steps. The sequence is that of Porphobilinogen deaminase from Synechococcus sp. (strain RCC307).